The sequence spans 374 residues: Guanine nucleotide-binding protein subunit alpha-15 (374 aa).

Positions 41 to 374 constitute a G-alpha domain; that stretch reads EELKLLLLGP…ARYLDEINLL (334 aa). The G1 motif stretch occupies residues 44 to 57; the sequence is KLLLLGPGESGKST. Residues 49–56, 183–189, 208–212, 277–280, and A346 each bind GTP; these read GPGESGKS, LRSRMPT, DVGGQ, and NKTD. Residues S56 and T189 each contribute to the Mg(2+) site. Residues 181–189 are G2 motif; sequence DVLRSRMPT. The tract at residues 204-213 is G3 motif; that stretch reads LRIVDVGGQR. The interval 273-280 is G4 motif; that stretch reads ILFLNKTD. Positions 344–349 are G5 motif; that stretch reads TCATDT.

It belongs to the G-alpha family. G(q) subfamily. As to quaternary structure, g proteins are composed of 3 units; alpha, beta and gamma. The alpha chain contains the guanine nucleotide binding site. Expressed primarily in hematopoietic cells. Coexpressed with EDG6 at the same relative levels in all tissues examined, with the highest levels in adult spleen and lung.

Guanine nucleotide-binding proteins (G proteins) are involved as modulators or transducers in various transmembrane signaling systems. This is Guanine nucleotide-binding protein subunit alpha-15 (Gna15) from Mus musculus (Mouse).